Reading from the N-terminus, the 289-residue chain is Glucosamine-6-phosphate deaminase 1 (289 aa).

Lys64 is modified (N6-acetyllysine). The Proton acceptor; for enolization step role is filled by Asp72. The active-site For ring-opening step is the Asp141. His143 acts as the Proton acceptor; for ring-opening step in catalysis. Residue Glu148 is the For ring-opening step of the active site. Thr161 carries the phosphothreonine modification.

The protein belongs to the glucosamine/galactosamine-6-phosphate isomerase family. In terms of assembly, homohexamer.

The protein resides in the cytoplasm. The catalysed reaction is alpha-D-glucosamine 6-phosphate + H2O = beta-D-fructose 6-phosphate + NH4(+). The protein operates within nucleotide-sugar biosynthesis; UDP-N-acetyl-alpha-D-glucosamine biosynthesis; alpha-D-glucosamine 6-phosphate from D-fructose 6-phosphate: step 1/1. With respect to regulation, allosterically activated by N-acetylglucosamine-6-phosphate (GlcNAc6P). Functionally, catalyzes the reversible conversion of alpha-D-glucosamine 6-phosphate (GlcN-6P) into beta-D-fructose 6-phosphate (Fru-6P) and ammonium ion, a regulatory reaction step in de novo uridine diphosphate-N-acetyl-alpha-D-glucosamine (UDP-GlcNAc) biosynthesis via hexosamine pathway. Deamination is coupled to aldo-keto isomerization mediating the metabolic flux from UDP-GlcNAc toward Fru-6P. At high ammonium level can drive amination and isomerization of Fru-6P toward hexosamines and UDP-GlcNAc synthesis. Has a role in fine tuning the metabolic fluctuations of cytosolic UDP-GlcNAc and their effects on hyaluronan synthesis that occur during tissue remodeling. Seems to trigger calcium oscillations in mammalian eggs. These oscillations serve as the essential trigger for egg activation and early development of the embryo. This is Glucosamine-6-phosphate deaminase 1 from Homo sapiens (Human).